Here is a 240-residue protein sequence, read N- to C-terminus: Phosphoribosylaminoimidazole-succinocarboxamide synthase (240 aa).

The protein belongs to the SAICAR synthetase family.

It carries out the reaction 5-amino-1-(5-phospho-D-ribosyl)imidazole-4-carboxylate + L-aspartate + ATP = (2S)-2-[5-amino-1-(5-phospho-beta-D-ribosyl)imidazole-4-carboxamido]succinate + ADP + phosphate + 2 H(+). Its pathway is purine metabolism; IMP biosynthesis via de novo pathway; 5-amino-1-(5-phospho-D-ribosyl)imidazole-4-carboxamide from 5-amino-1-(5-phospho-D-ribosyl)imidazole-4-carboxylate: step 1/2. The chain is Phosphoribosylaminoimidazole-succinocarboxamide synthase from Acidithiobacillus ferrooxidans (strain ATCC 23270 / DSM 14882 / CIP 104768 / NCIMB 8455) (Ferrobacillus ferrooxidans (strain ATCC 23270)).